Reading from the N-terminus, the 323-residue chain is MDPKFQRVALSDGHFIPVLGFGTYAPEEVPKSKAMEATKIAIDAGFRHIDSAYFYKNEKEVGLAIRSKIADGTVKREDIFYTSKLWCTFHRPELVRPSLEDSLKNLQLDYVDLYIIHFPTALKPGVEIIPTDEHGKAIFDTVDICATWEAMEKCKDAGLAKSIGVSNFNRRQLEMILNKPGLKYKPVCNQVECHPYLNQGKLLEFCKSKGIVLVAYSALGSHREPEWVDQSAPVLLEDPLIGALAKKHQQTPALIALRYQLQRGIVVLAKSFTEKRIKENIQVFEFQLPSEDMKVIDSLNRNFRYVTADFAIGHPNYPFSDEY.

NADP(+)-binding positions include T23–Y24 and D50. Residue Y24 participates in substrate binding. Residue Y55 is the Proton donor of the active site. H117 lines the substrate pocket. NADP(+) is bound by residues S166–N167, Q190, Y216–S221, and K270–N280.

It belongs to the aldo/keto reductase family.

The protein localises to the cytoplasm. It catalyses the reaction prostaglandin F2alpha + NADP(+) = prostaglandin E2 + NADPH + H(+). It carries out the reaction (17R,20S)-17,20-dihydroxypregn-4-en-3-one + NADP(+) = 17alpha-hydroxyprogesterone + NADPH + H(+). The catalysed reaction is (17R,20S)-17,20-dihydroxypregn-4-en-3-one + NAD(+) = 17alpha-hydroxyprogesterone + NADH + H(+). Functionally, can convert prostaglandin E2 to prostaglandin F2-alpha. The sequence is that of Prostaglandin-E(2) 9-reductase (AKR1C5) from Oryctolagus cuniculus (Rabbit).